We begin with the raw amino-acid sequence, 226 residues long: CASP-like protein 2BC1 (226 aa).

The Cytoplasmic segment spans residues 1 to 37; that stretch reads MRKHIDIVFSRLSGPILNPPPDNNVIPKTDRKLRITE. The helical transmembrane segment at 38 to 58 threads the bilayer; the sequence is VILRFAVVIFALVSAIMVGTA. Residues 59 to 78 are Extracellular-facing; that stretch reads SGTRDLGGGIRIHAHFTLLK. Residues 79-99 form a helical membrane-spanning segment; the sequence is TLPFLVIVDGILAVYSLLQGL. The Cytoplasmic segment spans residues 100-114; the sequence is RCFLSLYMRHILLNK. Residues 115 to 135 traverse the membrane as a helical segment; it reads ALAWTIFCCDQALAYVIFAAA. At 136–170 the chain is on the extracellular side; the sequence is ASTAETAYISEQGLDELQWIKVCMFFRAYCFKSGA. A helical transmembrane segment spans residues 171-191; it reads GMINAFLAALCMVFVSGMSVF. At 192–226 the chain is on the cytoplasmic side; that stretch reads HLFRLYGEKRAYGHIAEQVVISEEAAERRNSLNGI.

The protein belongs to the Casparian strip membrane proteins (CASP) family. In terms of assembly, homodimer and heterodimers.

The protein resides in the cell membrane. The sequence is that of CASP-like protein 2BC1 from Picea sitchensis (Sitka spruce).